Here is a 391-residue protein sequence, read N- to C-terminus: Phosphoglycerate kinase (391 aa).

Residues 21 to 23 (DLN), R36, 59 to 62 (HLGR), R113, and R146 each bind substrate. Residues K197, E319, and 345-348 (GGDT) each bind ATP.

It belongs to the phosphoglycerate kinase family. Monomer.

It localises to the cytoplasm. The catalysed reaction is (2R)-3-phosphoglycerate + ATP = (2R)-3-phospho-glyceroyl phosphate + ADP. The protein operates within carbohydrate degradation; glycolysis; pyruvate from D-glyceraldehyde 3-phosphate: step 2/5. The protein is Phosphoglycerate kinase of Shewanella baltica (strain OS155 / ATCC BAA-1091).